The following is a 218-amino-acid chain: Deoxyribose-phosphate aldolase (218 aa).

The active-site Proton donor/acceptor is the aspartate 92. The Schiff-base intermediate with acetaldehyde role is filled by lysine 156. Lysine 185 functions as the Proton donor/acceptor in the catalytic mechanism.

This sequence belongs to the DeoC/FbaB aldolase family. DeoC type 1 subfamily.

Its subcellular location is the cytoplasm. The catalysed reaction is 2-deoxy-D-ribose 5-phosphate = D-glyceraldehyde 3-phosphate + acetaldehyde. The protein operates within carbohydrate degradation; 2-deoxy-D-ribose 1-phosphate degradation; D-glyceraldehyde 3-phosphate and acetaldehyde from 2-deoxy-alpha-D-ribose 1-phosphate: step 2/2. In terms of biological role, catalyzes a reversible aldol reaction between acetaldehyde and D-glyceraldehyde 3-phosphate to generate 2-deoxy-D-ribose 5-phosphate. The sequence is that of Deoxyribose-phosphate aldolase from Desulfitobacterium hafniense (strain DSM 10664 / DCB-2).